A 136-amino-acid polypeptide reads, in one-letter code: Protein NrdI (136 aa).

Belongs to the NrdI family.

Functionally, probably involved in ribonucleotide reductase function. The polypeptide is Protein NrdI (Klebsiella pneumoniae subsp. pneumoniae (strain ATCC 700721 / MGH 78578)).